Reading from the N-terminus, the 650-residue chain is p-hydroxybenzoic acid efflux pump subunit AaeB (650 aa).

11 helical membrane passes run 7-27, 32-52, 61-81, 87-107, 115-135, 148-168, 365-385, 402-422, 426-446, 450-470, and 478-498; these read FPIK…HLNL, WAVM…GGDP, GILR…IMIA, VVML…SSLI, LGLA…SGGL, EIIL…PRSI, LFWL…LGVI, FVYG…YILP, QSAV…GILI, QIGT…DNPM, and IDNA…ILLI.

The protein belongs to the aromatic acid exporter ArAE (TC 2.A.85) family.

Its subcellular location is the cell inner membrane. In terms of biological role, forms an efflux pump with AaeA. Could function as a metabolic relief valve, allowing to eliminate certain compounds when they accumulate to high levels in the cell. In Pantoea ananatis (strain LMG 20103), this protein is p-hydroxybenzoic acid efflux pump subunit AaeB.